Consider the following 937-residue polypeptide: Isoleucine--tRNA ligase (937 aa).

The short motif at Pro-58–His-68 is the 'HIGH' region element. Glu-561 serves as a coordination point for L-isoleucyl-5'-AMP. The 'KMSKS' region signature appears at Lys-602 to Ser-606. Lys-605 provides a ligand contact to ATP. Zn(2+)-binding residues include Cys-900, Cys-903, Cys-920, and Cys-923.

This sequence belongs to the class-I aminoacyl-tRNA synthetase family. IleS type 1 subfamily. In terms of assembly, monomer. It depends on Zn(2+) as a cofactor.

The protein resides in the cytoplasm. The enzyme catalyses tRNA(Ile) + L-isoleucine + ATP = L-isoleucyl-tRNA(Ile) + AMP + diphosphate. Catalyzes the attachment of isoleucine to tRNA(Ile). As IleRS can inadvertently accommodate and process structurally similar amino acids such as valine, to avoid such errors it has two additional distinct tRNA(Ile)-dependent editing activities. One activity is designated as 'pretransfer' editing and involves the hydrolysis of activated Val-AMP. The other activity is designated 'posttransfer' editing and involves deacylation of mischarged Val-tRNA(Ile). This chain is Isoleucine--tRNA ligase, found in Photorhabdus laumondii subsp. laumondii (strain DSM 15139 / CIP 105565 / TT01) (Photorhabdus luminescens subsp. laumondii).